The sequence spans 565 residues: MFSVNNTHSSVSCSPSINSNSTSNEHYLRILTEWEKNSSPGEERGIAFNRLSQCFQNQEAVLNLSDLNLTSLPELPKHISALIVENNKLTSLPKLPAFLKELNADNNRLSVIPELPESLTTLSVRSNQLENLPVLPNHLTSLFVENNRLYNLPALPEKLKFLHVYYNRLTTLPDLPDKLEILCAQRNNLVTFPQFSDRNNIRQKEYYFHFNQITTLPESFSQLDSSYRINISGNPLSTRVLQSLQRLTSSPDYHGPQIYFSMSDGQQNTLHRPLADAVTAWFPENKQSDVSQIWHAFEHEEHANTFSAFLDRLSDTVSARNTSGFREQVAAWLEKLSASAELRQQSFAVAADATESCEDRVALTWNNLRKTLLVHQASEGLFDNDTGALLSLGREMFRLEILEDIARDKVRTLHFVDEIEVYLAFQTMLAEKLQLSTAVKEMRFYGVSGVTANDLRTAEAMVRSREENEFTDWFSLWGPWHAVLKRTEADRWAQAEEQKYEMLENEYSQRVADRLKASGLSGDADAEREAGAQVMRETEQQIYRQLTDEVLALRLSENGSRLHHS.

Positions 1 to 22 are disordered; the sequence is MFSVNNTHSSVSCSPSINSNST. Positions 1-262 are interaction with target proteins; that stretch reads MFSVNNTHSS…YHGPQIYFSM (262 aa). The span at 9 to 22 shows a compositional bias: low complexity; sequence SSVSCSPSINSNST. LRR repeat units lie at residues 58–79, 80–97, 98–119, 120–137, 138–157, 158–179, 180–199, 202–223, and 225–248; these read QEAV…PKHI, SALI…KLPA, FLKE…PESL, TTLS…VLPN, HLTS…ALPE, KLKF…PDKL, EILC…SDRN, RQKE…FSQL, and SSYR…QRLT. A linker region spans residues 263–270; that stretch reads SDGQQNTL. The interval 271–565 is E3 ubiquitin-protein ligase catalytic domain; the sequence is HRPLADAVTA…SENGSRLHHS (295 aa). Positions 273-565 constitute an NEL domain; the sequence is PLADAVTAWF…SENGSRLHHS (293 aa). The active-site Glycyl thioester intermediate is the C357.

It belongs to the LRR-containing bacterial E3 ligase family. Post-translationally, ubiquitinated in the presence of host E1 ubiquitin-activating enzyme, E2 ubiquitin-conjugating enzyme and ubiquitin.

It localises to the secreted. It is found in the host cytoplasm. It carries out the reaction S-ubiquitinyl-[E2 ubiquitin-conjugating enzyme]-L-cysteine + [acceptor protein]-L-lysine = [E2 ubiquitin-conjugating enzyme]-L-cysteine + N(6)-ubiquitinyl-[acceptor protein]-L-lysine.. It functions in the pathway protein modification; protein ubiquitination. Functionally, E3 ubiquitin ligase effector protein that interferes with host's innate immunity. Functions to alter host cell physiology and promote bacterial survival in host tissues. Catalyzes ubiquitination of human gasdermins GSDMB and GSDMD, promoting their degradation by the proteasome, thereby preventing cell death. In contrast, activates host cell pyroptosis in mouse cells: catalyzes ubiquitination of mouse Nlrp1b allele 1 protein, releasing the cleaved C-terminal part of Nlrp1b, which polymerizes and forms the Nlrp1b inflammasome followed by host cell pyroptosis. Does not catalyze ubiquitination of mouse GSDMD. The polypeptide is E3 ubiquitin-protein ligase ipaH7.8 (Shigella flexneri).